Reading from the N-terminus, the 206-residue chain is Bis(5'-adenosyl)-triphosphatase (206 aa).

The HIT domain occupies 3–115; it reads KPIYFSKFLV…KINNVGDLIY (113 aa). The Histidine triad motif motif lies at 96-100; the sequence is HLHTH. Histidine 98 serves as the catalytic Tele-AMP-histidine intermediate. The tract at residues 143-164 is disordered; sequence RQARKNNSTSATVDGDELSQGP.

In terms of assembly, homodimer. Requires Mn(2+) as cofactor.

The protein localises to the cytoplasm. Its subcellular location is the nucleus. It is found in the mitochondrion. The enzyme catalyses P(1),P(3)-bis(5'-adenosyl) triphosphate + H2O = AMP + ADP + 2 H(+). Functionally, cleaves A-5'-PPP-5'A to yield AMP and ADP. Can cleave all dinucleoside polyphosphates, provided the phosphate chain contains at least 3 phosphates and that 1 of the 2 bases composing the nucleotide is a purine. Is most effective on dinucleoside triphosphates. Negatively regulates intracellular dinucleoside polyphosphate levels, which elevate following heat shock. This Saccharomyces cerevisiae (strain RM11-1a) (Baker's yeast) protein is Bis(5'-adenosyl)-triphosphatase (HNT2).